A 423-amino-acid polypeptide reads, in one-letter code: COP9 signalosome complex subunit 3 (423 aa).

Position 2 is an N-acetylalanine (A2). The region spanning 197 to 365 (NFERALYFYE…GMVSFHDNPE (169 aa)) is the PCI domain. The segment at 402–423 (QFVQKSMGSQEDDSGNKPSSYS) is disordered. S407, S410, and S423 each carry phosphoserine.

The protein belongs to the CSN3 family. Component of the CSN complex, composed of COPS1/GPS1, COPS2, COPS3, COPS4, COPS5, COPS6, COPS7 (COPS7A or COPS7B), COPS8 and COPS9. In the complex, it probably interacts directly with COPS1, COPS4, COPS8 and COPS9. Interacts with CK2 and PKD. Interacts with the translation initiation factor EIF3S6 and IKBKG. Interacts with ERCC6.

The protein resides in the cytoplasm. It localises to the nucleus. In terms of biological role, component of the COP9 signalosome complex (CSN), a complex involved in various cellular and developmental processes. The CSN complex is an essential regulator of the ubiquitin (Ubl) conjugation pathway by mediating the deneddylation of the cullin subunits of SCF-type E3 ligase complexes, leading to decrease the Ubl ligase activity of SCF-type complexes such as SCF, CSA or DDB2. The complex is also involved in phosphorylation of p53/TP53, c-jun/JUN, IkappaBalpha/NFKBIA, ITPK1 and IRF8/ICSBP, possibly via its association with CK2 and PKD kinases. CSN-dependent phosphorylation of TP53 and JUN promotes and protects degradation by the Ubl system, respectively. Essential to maintain the survival of epiblast cells and thus the development of the postimplantation embryo. The polypeptide is COP9 signalosome complex subunit 3 (COPS3) (Bos taurus (Bovine)).